The chain runs to 319 residues: tRNA (guanine-N(7)-)-methyltransferase (319 aa).

The interval 1-44 (MSESPETPEPSPAQSPEAAPEQPQAARPVTPGSQASFGTYGGRP) is disordered. Over residues 14-26 (QSPEAAPEQPQAA) the composition is skewed to low complexity. Glu-103, Glu-128, Asn-155, and Asp-178 together coordinate S-adenosyl-L-methionine. Residue Asp-178 is part of the active site. Lys-182 and Asp-214 together coordinate substrate. The disordered stretch occupies residues 262-288 (APVKEGRAPVSTEHTGPNEGVDETGGW). Residue 298-301 (TSFE) coordinates substrate.

This sequence belongs to the class I-like SAM-binding methyltransferase superfamily. TrmB family.

It carries out the reaction guanosine(46) in tRNA + S-adenosyl-L-methionine = N(7)-methylguanosine(46) in tRNA + S-adenosyl-L-homocysteine. It functions in the pathway tRNA modification; N(7)-methylguanine-tRNA biosynthesis. Functionally, catalyzes the formation of N(7)-methylguanine at position 46 (m7G46) in tRNA. This chain is tRNA (guanine-N(7)-)-methyltransferase, found in Arthrobacter sp. (strain FB24).